A 268-amino-acid chain; its full sequence is MEKSNYHSNVNHHKRHMKQSGEKRAFLWAFIISFTVCTLFLGWRLVSVLEATQLPPIPATHTGSGTGVAENPEENTLATAKEQGDEQEWSLILVNRQNPIPAQYDVELEQLSNGERIDIRISPYLQDLFDAARADGVYPIVASGYRTTEKQQEIMDEKVAEYKAKGYTSAQAKAEAETWVAVPGTSEHQLGLAVDINADGIHSTGNEVYRWLDENSYRFGFIRRYPPDKTEITGVSNEPWHYRYVGIEAATKIYHQGLCLEEYLNTEK.

The helical transmembrane segment at 25-47 threads the bilayer; that stretch reads AFLWAFIISFTVCTLFLGWRLVS. Substrate is bound by residues Gln151, 179-181, and Ser186; that span reads WVA. 2 residues coordinate Zn(2+): His188 and Asp195. The Proton donor/acceptor role is filled by Glu238. His241 contributes to the Zn(2+) binding site.

The protein belongs to the peptidase M15B family. In terms of assembly, monomer. Zn(2+) serves as cofactor.

Its subcellular location is the cell membrane. Carboxypeptidase activity is insensitive to beta-lactams since it is not affected by penicillin G or ampicillin and is inhibited only by very high concentrations of cefalotin and cefoxitin. Functionally, carboxypeptidase that cleaves the C-terminal D-alanine residue from the peptidoglycan-derived pentapeptide L-Ala-gamma-D-Glu-L-Lys-D-Ala-D-Ala in vitro. Therefore, should contribute in vivo to the hydrolysis of the D-alanyl-D-alanine-containing peptidoglycan precursors. May increase the level of glycopeptide antibiotics resistance by decreasing the availability of D-Ala-D-Ala termini from the cell surface, which constitute the antibiotic target residues. This chain is D-alanyl-D-alanine carboxypeptidase, found in Enterococcus faecalis (strain ATCC 700802 / V583).